The sequence spans 483 residues: Aspartyl/glutamyl-tRNA(Asn/Gln) amidotransferase subunit B (483 aa).

This sequence belongs to the GatB/GatE family. GatB subfamily. As to quaternary structure, heterotrimer of A, B and C subunits.

It catalyses the reaction L-glutamyl-tRNA(Gln) + L-glutamine + ATP + H2O = L-glutaminyl-tRNA(Gln) + L-glutamate + ADP + phosphate + H(+). The enzyme catalyses L-aspartyl-tRNA(Asn) + L-glutamine + ATP + H2O = L-asparaginyl-tRNA(Asn) + L-glutamate + ADP + phosphate + 2 H(+). Its function is as follows. Allows the formation of correctly charged Asn-tRNA(Asn) or Gln-tRNA(Gln) through the transamidation of misacylated Asp-tRNA(Asn) or Glu-tRNA(Gln) in organisms which lack either or both of asparaginyl-tRNA or glutaminyl-tRNA synthetases. The reaction takes place in the presence of glutamine and ATP through an activated phospho-Asp-tRNA(Asn) or phospho-Glu-tRNA(Gln). In Rickettsia conorii (strain ATCC VR-613 / Malish 7), this protein is Aspartyl/glutamyl-tRNA(Asn/Gln) amidotransferase subunit B.